Here is a 208-residue protein sequence, read N- to C-terminus: Ubiquitin-conjugating enzyme E2 S (208 aa).

The 147-residue stretch at 14–160 folds into the UBC core domain; that stretch reads QTIRQVMKEL…ARMMTEIHAQ (147 aa). The Glycyl thioester intermediate role is filled by Cys98. The segment at 161 to 193 is disordered; the sequence is PAKCGAGASDAKDDDGPSTKKHAGLDKKLQDKK. The span at 170 to 193 shows a compositional bias: basic and acidic residues; it reads DAKDDDGPSTKKHAGLDKKLQDKK.

The protein belongs to the ubiquitin-conjugating enzyme family.

It carries out the reaction S-ubiquitinyl-[E1 ubiquitin-activating enzyme]-L-cysteine + [E2 ubiquitin-conjugating enzyme]-L-cysteine = [E1 ubiquitin-activating enzyme]-L-cysteine + S-ubiquitinyl-[E2 ubiquitin-conjugating enzyme]-L-cysteine.. It participates in protein modification; protein ubiquitination. In terms of biological role, catalyzes the covalent attachment of ubiquitin to other proteins. Acts as an essential factor of the anaphase promoting complex/cyclosome (APC/C), a cell cycle-regulated ubiquitin ligase that controls progression through mitosis. Acts by specifically elongating polyubiquitin chains initiated by the E2 enzyme vih/UbcH10 on APC/C substrates, enhancing the degradation of APC/C substrates by the proteasome and promoting mitotic exit. The polypeptide is Ubiquitin-conjugating enzyme E2 S (Drosophila virilis (Fruit fly)).